We begin with the raw amino-acid sequence, 451 residues long: Trigger factor (451 aa).

Positions 173–258 constitute a PPIase FKBP-type domain; it reads GDRVTLDFVG…LKKIEWAHLP (86 aa).

This sequence belongs to the FKBP-type PPIase family. Tig subfamily.

It is found in the cytoplasm. The catalysed reaction is [protein]-peptidylproline (omega=180) = [protein]-peptidylproline (omega=0). Involved in protein export. Acts as a chaperone by maintaining the newly synthesized protein in an open conformation. Functions as a peptidyl-prolyl cis-trans isomerase. This is Trigger factor from Cupriavidus necator (strain ATCC 17699 / DSM 428 / KCTC 22496 / NCIMB 10442 / H16 / Stanier 337) (Ralstonia eutropha).